Consider the following 195-residue polypeptide: MRLLLLLLVAASAVVRSEASANLGGVPSKRLKMQYATGPLLKFQICVSUGYRRVFEEYMRVISQRYPDIRIEGENYLPQPIYRHIASFLSVFKLVLIGLIIVGKDPFAFFGMQAPSIWQWGQENKVYACMMVFFLSNMIENQCMSTGAFEITLNDVPVWSKLESGHLPSMQQLVQILDNEMKLNVHMDSIPHHRS.

Residues 1–19 form the signal peptide; it reads MRLLLLLLVAASAVVRSEA. A cross-link (cysteinyl-selenocysteine (Cys-Sec)) is located at residues 46-49; sequence CVSU. Sec49 is a non-standard amino acid (selenocysteine). A helical membrane pass occupies residues 85-103; it reads IASFLSVFKLVLIGLIIVG.

The protein belongs to the SelWTH family. Selenoprotein T subfamily. May contain a selenide-sulfide bond between Cys-46 and Sec-49. This bond is speculated to serve as redox-active pair. In terms of tissue distribution, ubiquitous. Highly expressed in the endocrine pancreas. Expressed at low levels in the adult brain.

The protein localises to the endoplasmic reticulum membrane. The enzyme catalyses [thioredoxin]-dithiol + NADP(+) = [thioredoxin]-disulfide + NADPH + H(+). Functionally, selenoprotein with thioredoxin reductase-like oxidoreductase activity. Protects dopaminergic neurons against oxidative stress and cell death. Involved in ADCYAP1/PACAP-induced calcium mobilization and neuroendocrine secretion. Plays a role in fibroblast anchorage and redox regulation. In gastric smooth muscle, modulates the contraction processes through the regulation of calcium release and MYLK activation. In pancreatic islets, involved in the control of glucose homeostasis, contributes to prolonged ADCYAP1/PACAP-induced insulin secretion. The protein is Thioredoxin reductase-like selenoprotein T of Mus musculus (Mouse).